Reading from the N-terminus, the 332-residue chain is Ferredoxin--NADP reductase (332 aa).

Residues aspartate 33, glutamine 41, tyrosine 46, alanine 86, methionine 121, aspartate 282, and serine 325 each coordinate FAD.

Belongs to the ferredoxin--NADP reductase type 2 family. Homodimer. It depends on FAD as a cofactor.

It carries out the reaction 2 reduced [2Fe-2S]-[ferredoxin] + NADP(+) + H(+) = 2 oxidized [2Fe-2S]-[ferredoxin] + NADPH. In Sulfurisphaera tokodaii (strain DSM 16993 / JCM 10545 / NBRC 100140 / 7) (Sulfolobus tokodaii), this protein is Ferredoxin--NADP reductase.